The primary structure comprises 147 residues: Large ribosomal subunit protein uL11 (147 aa).

The protein belongs to the universal ribosomal protein uL11 family. As to quaternary structure, part of the ribosomal stalk of the 50S ribosomal subunit. Interacts with L10 and the large rRNA to form the base of the stalk. L10 forms an elongated spine to which L12 dimers bind in a sequential fashion forming a multimeric L10(L12)X complex. In terms of processing, one or more lysine residues are methylated.

In terms of biological role, forms part of the ribosomal stalk which helps the ribosome interact with GTP-bound translation factors. The sequence is that of Large ribosomal subunit protein uL11 from Corynebacterium aurimucosum (strain ATCC 700975 / DSM 44827 / CIP 107346 / CN-1) (Corynebacterium nigricans).